A 48-amino-acid chain; its full sequence is Phospholipase A2 TI-Nh (48 aa).

His25 is an active-site residue. Asp26 serves as a coordination point for Ca(2+).

This sequence belongs to the phospholipase A2 family. Group I subfamily. D49 sub-subfamily. In terms of assembly, monomer. It depends on Ca(2+) as a cofactor. As to expression, expressed by the venom gland.

The protein resides in the secreted. It carries out the reaction a 1,2-diacyl-sn-glycero-3-phosphocholine + H2O = a 1-acyl-sn-glycero-3-phosphocholine + a fatty acid + H(+). Phospholipase A2 with weak enzymatic activity, which partially inhibits thrombin enzymatic activity (Ki=73 nM), completely inhibits thrombin-induced platelet aggregation and retards fibrin clot formation (IC(50)=0.2 nM). May exert this anticoagulant effect through a non-enzymatic mechanism. This chain is Phospholipase A2 TI-Nh, found in Naja haje haje (Egyptian cobra).